The following is a 350-amino-acid chain: Inositol 2-dehydrogenase/D-chiro-inositol 3-dehydrogenase (350 aa).

This sequence belongs to the Gfo/Idh/MocA family. Homotetramer.

It carries out the reaction myo-inositol + NAD(+) = scyllo-inosose + NADH + H(+). The enzyme catalyses 1D-chiro-inositol + NAD(+) = scyllo-inosine + NADH + H(+). The protein operates within polyol metabolism; myo-inositol degradation into acetyl-CoA; acetyl-CoA from myo-inositol: step 1/7. In terms of biological role, involved in the oxidation of myo-inositol (MI) and D-chiro-inositol (DCI) to 2-keto-myo-inositol (2KMI or 2-inosose) and 1-keto-D-chiro-inositol (1KDCI), respectively. The protein is Inositol 2-dehydrogenase/D-chiro-inositol 3-dehydrogenase of Lactiplantibacillus plantarum (strain ATCC BAA-793 / NCIMB 8826 / WCFS1) (Lactobacillus plantarum).